Consider the following 141-residue polypeptide: HTH-type transcriptional regulator ZntR (141 aa).

The region spanning 1 to 70 is the HTH merR-type domain; that stretch reads MYRIGELAKM…LESIRELLSI (70 aa). The H-T-H motif DNA-binding region spans 4–23; sequence IGELAKMAEVTPDTIRYYEK. Positions 114, 115, 119, and 124 each coordinate Zn(2+).

In terms of assembly, homodimer.

Zinc-responsive transcriptional regulator of zntA. In Escherichia coli O157:H7, this protein is HTH-type transcriptional regulator ZntR (zntR).